The primary structure comprises 563 residues: MLEEAGEVLENVLKASCLPLGFIVFLPAVLLLVAPPLPAADAAHEFTVYRMQQYDLQGQPYGTRNAVLNTEARTVDADVLSRRCVLMRLLDFSYEHYQKALRQSAGAVVIILPRAMAAVPQDVVRQFMEIEPEMLAMETVVPVYFAVEDEALLSIYEQTQAASASQGSASAAEVLLHTATANGFQMVTSGAQSQAVSDWLITSVEGRLTGLGGEDLPTIVIVAHYDAFGVAPWLSLGADSNGSGISVLLELARLFSRLYTYKRTHAAYNLLFFASGGGKFNYQGTKRWLEDSLDHTDSSLLQDNVAFVLCLDTVGRGSHLRLHVSKPPREGTLQHVFLRELEMVAAHQFPDVSFSMVHKKINLADDVLAWEHERFAIRRLPAFTLSHLENHRAGPRSSIMDVRSRVDSKTLTRNTRIIAEALTRVIYNLTEKGTPPDMPVFTEQMQVQQEQIDSVMDWLTNQPRAAQLLDKDGTFLSTLEHFLSRYLKDVRQHHVKADKRDPEFVFYDQLKQVMNAYRVKPAIFDLLLALCIGAYLGMAYTAVQHFHVLYKTVQRLLLKAKAQ.

An N-terminal signal peptide occupies residues 1–42 (MLEEAGEVLENVLKASCLPLGFIVFLPAVLLLVAPPLPAADA). Topologically, residues 43-522 (AHEFTVYRMQ…VMNAYRVKPA (480 aa)) are lumenal. 2 N-linked (GlcNAc...) asparagine glycosylation sites follow: Asn-241 and Asn-428. A helical membrane pass occupies residues 523-543 (IFDLLLALCIGAYLGMAYTAV). At 544-563 (QHFHVLYKTVQRLLLKAKAQ) the chain is on the cytoplasmic side.

Belongs to the nicastrin family. In terms of assembly, component of the back of Sec61 (BOS) complex, composed of NCLN/Nicalin, NOMO1 and TMEM147. The BOS complex is part of the multi-pass translocon (MPT) complex, composed of three subcomplexes, the GEL complex (composed of RAB5IF/OPTI and TMCO1), the BOS complex (composed of NCLN/Nicalin, NOMO1 and TMEM147) and the PAT complex (composed of WDR83OS/Asterix and CCDC47). The MPT complex associates with the SEC61 complex.

It localises to the endoplasmic reticulum membrane. Component of the multi-pass translocon (MPT) complex that mediates insertion of multi-pass membrane proteins into the lipid bilayer of membranes. The MPT complex takes over after the SEC61 complex: following membrane insertion of the first few transmembrane segments of proteins by the SEC61 complex, the MPT complex occludes the lateral gate of the SEC61 complex to promote insertion of subsequent transmembrane regions. May antagonize Nodal signaling and subsequent organization of axial structures during mesodermal patterning, via its interaction with NOMO. The sequence is that of BOS complex subunit NCLN (Ncln) from Rattus norvegicus (Rat).